A 690-amino-acid polypeptide reads, in one-letter code: Potassium-transporting ATPase ATP-binding subunit (690 aa).

The interval 1–23 (MNSTSTVRQPGGPRQQRRHTPKA) is disordered. Transmembrane regions (helical) follow at residues 44–64 (IMVKNPVMFMVWVGTLITGML), 78–98 (AMFNGLVTVILLFTVLFANFA), 233–253 (IALTVLLAVLTLVFLIVVATL), and 268–288 (LLIALLVALIPTTIGGLLSAI). The active-site 4-aspartylphosphate intermediate is the Asp-321. ATP contacts are provided by residues Asp-358, Glu-362, 389-396 (FSARTRMS), and Lys-408. Mg(2+) contacts are provided by Asp-531 and Asp-535. The next 3 helical transmembrane spans lie at 601 to 621 (FAIIPAMFAGIGIGALNIMDL), 627 to 647 (AVLSALIYNALIIPALIPLAL), and 665 to 685 (ILVYGLGGIIVPFVAIKLIDL).

Belongs to the cation transport ATPase (P-type) (TC 3.A.3) family. Type IA subfamily. The system is composed of three essential subunits: KdpA, KdpB and KdpC.

Its subcellular location is the cell inner membrane. It catalyses the reaction K(+)(out) + ATP + H2O = K(+)(in) + ADP + phosphate + H(+). Part of the high-affinity ATP-driven potassium transport (or Kdp) system, which catalyzes the hydrolysis of ATP coupled with the electrogenic transport of potassium into the cytoplasm. This subunit is responsible for energy coupling to the transport system and for the release of the potassium ions to the cytoplasm. The chain is Potassium-transporting ATPase ATP-binding subunit from Synechocystis sp. (strain ATCC 27184 / PCC 6803 / Kazusa).